The sequence spans 162 residues: 2-C-methyl-D-erythritol 2,4-cyclodiphosphate synthase (162 aa).

The a divalent metal cation site is built by aspartate 10 and histidine 12. 4-CDP-2-C-methyl-D-erythritol 2-phosphate contacts are provided by residues 10-12 and 36-37; these read DVH and HS. Histidine 44 contributes to the a divalent metal cation binding site. 4-CDP-2-C-methyl-D-erythritol 2-phosphate is bound by residues 58–60, 63–67, 102–108, 134–137, phenylalanine 141, and arginine 144; these read DIG, FPDTD, AQAPRMA, and TTSE.

It belongs to the IspF family. Homotrimer. A divalent metal cation serves as cofactor.

It carries out the reaction 4-CDP-2-C-methyl-D-erythritol 2-phosphate = 2-C-methyl-D-erythritol 2,4-cyclic diphosphate + CMP. It participates in isoprenoid biosynthesis; isopentenyl diphosphate biosynthesis via DXP pathway; isopentenyl diphosphate from 1-deoxy-D-xylulose 5-phosphate: step 4/6. In terms of biological role, involved in the biosynthesis of isopentenyl diphosphate (IPP) and dimethylallyl diphosphate (DMAPP), two major building blocks of isoprenoid compounds. Catalyzes the conversion of 4-diphosphocytidyl-2-C-methyl-D-erythritol 2-phosphate (CDP-ME2P) to 2-C-methyl-D-erythritol 2,4-cyclodiphosphate (ME-CPP) with a corresponding release of cytidine 5-monophosphate (CMP). The chain is 2-C-methyl-D-erythritol 2,4-cyclodiphosphate synthase from Chromohalobacter salexigens (strain ATCC BAA-138 / DSM 3043 / CIP 106854 / NCIMB 13768 / 1H11).